The sequence spans 372 residues: Heat shock 70 kDa protein II (372 aa).

Belongs to the heat shock protein 70 family.

The chain is Heat shock 70 kDa protein II (HSP70II) from Paracentrotus lividus (Common sea urchin).